Consider the following 400-residue polypeptide: EARP-interacting protein homolog (400 aa).

The segment at 95 to 114 is disordered; sequence NNNSNNTNNNDNTNNNTNNN. Residues 96–114 are compositionally biased toward low complexity; the sequence is NNSNNTNNNDNTNNNTNNN. WD repeat units lie at residues 138-178, 227-267, and 271-311; these read GHTG…NEPT, AHSE…DPVK, and GHNH…SAFN. The segment covering 314–333 has biased composition (low complexity); the sequence is NNISNSNEQQHSQQPNEQQP. The segment at 314–348 is disordered; that stretch reads NNISNSNEQQHSQQPNEQQPQQPPQPVKQKKNKRN. A WD 4 repeat occupies 358 to 397; the sequence is EHEDSVYNISWSSSNFLFASLSYDGRFVVNNVPKEYSDIL.

This sequence belongs to the WD repeat EIPR1 family.

The chain is EARP-interacting protein homolog from Dictyostelium discoideum (Social amoeba).